The following is a 687-amino-acid chain: Dictomallein (687 aa).

2 disordered regions span residues 1 to 45 and 73 to 112; these read MGNG…SRRL and TAGG…STSA. A Peptidase M66 domain is found at 233-501; that stretch reads PVFGTDADVQ…QAWIASRVLA (269 aa). H393 is a Zn(2+) binding site. The active site involves E394. 2 residues coordinate Zn(2+): H397 and H403.

This sequence belongs to the dictomallein family. The cofactor is Zn(2+).

This Burkholderia mallei (strain NCTC 10247) protein is Dictomallein (dtmL).